The sequence spans 435 residues: Eukaryotic translation initiation factor 3 subunit E (435 aa).

The 174-residue stretch at Phe219–Leu392 folds into the PCI domain.

It belongs to the eIF-3 subunit E family. Component of the eukaryotic translation initiation factor 3 (eIF-3) complex.

It localises to the cytoplasm. Functionally, component of the eukaryotic translation initiation factor 3 (eIF-3) complex, which is involved in protein synthesis of a specialized repertoire of mRNAs and, together with other initiation factors, stimulates binding of mRNA and methionyl-tRNAi to the 40S ribosome. The eIF-3 complex specifically targets and initiates translation of a subset of mRNAs involved in cell proliferation. The polypeptide is Eukaryotic translation initiation factor 3 subunit E (eIF3-S6) (Culex quinquefasciatus (Southern house mosquito)).